The primary structure comprises 405 residues: L-rhamnonate dehydratase (405 aa).

The substrate site is built by histidine 33 and arginine 59. Mg(2+)-binding residues include aspartate 226, glutamate 252, and glutamate 280. Histidine 329 functions as the Proton acceptor in the catalytic mechanism. Substrate is bound at residue glutamate 349.

This sequence belongs to the mandelate racemase/muconate lactonizing enzyme family. RhamD subfamily. Homooctamer; tetramer of dimers. Mg(2+) is required as a cofactor.

The catalysed reaction is L-rhamnonate = 2-dehydro-3-deoxy-L-rhamnonate + H2O. Its function is as follows. Catalyzes the dehydration of L-rhamnonate to 2-keto-3-deoxy-L-rhamnonate (KDR). This chain is L-rhamnonate dehydratase, found in Escherichia coli O6:K15:H31 (strain 536 / UPEC).